Reading from the N-terminus, the 124-residue chain is Urotensin-2 (124 aa).

The N-terminal stretch at 1–20 (MYKLASCCLLFIGFLNPLLS) is a signal peptide. Residues 21–110 (LPLLDSREIS…HLLARIWKPY (90 aa)) constitute a propeptide that is removed on maturation. Cysteines 118 and 123 form a disulfide.

The protein belongs to the urotensin-2 family. In terms of tissue distribution, brain specific.

The protein resides in the secreted. Functionally, highly potent vasoconstrictor. This chain is Urotensin-2 (UTS2), found in Homo sapiens (Human).